A 219-amino-acid polypeptide reads, in one-letter code: 7-cyano-7-deazaguanine synthase (219 aa).

10–20 (FSGGQDSTTCL) provides a ligand contact to ATP. Zn(2+) is bound by residues cysteine 188, cysteine 197, cysteine 200, and cysteine 203.

Belongs to the QueC family. As to quaternary structure, homodimer. Zn(2+) serves as cofactor.

It carries out the reaction 7-carboxy-7-deazaguanine + NH4(+) + ATP = 7-cyano-7-deazaguanine + ADP + phosphate + H2O + H(+). The protein operates within purine metabolism; 7-cyano-7-deazaguanine biosynthesis. Catalyzes the ATP-dependent conversion of 7-carboxy-7-deazaguanine (CDG) to 7-cyano-7-deazaguanine (preQ(0)). The protein is 7-cyano-7-deazaguanine synthase of Clostridium botulinum (strain Loch Maree / Type A3).